The sequence spans 529 residues: Sodium/hydrogen exchanger 4 (529 aa).

At 1–19 (MSIGLTEFVTNKLAAEHPQ) the chain is on the cytoplasmic side. Residues 20 to 40 (VIPISVFIAILCLCLVIGHLL) form a helical membrane-spanning segment. Residues 41-45 (EENRW) lie on the Vacuolar side of the membrane. The chain crosses the membrane as a helical span at residues 46-66 (VNESITAILVGAASGTVILLI). Topologically, residues 67-73 (SKGKSSH) are cytoplasmic. The helical intramembrane region spans 74 to 94 (ILVFDEELFFIYLLPPIIFNA). Topologically, residues 95–112 (GFQVKKKKFFHNFLTIMS) are cytoplasmic. Residues 113 to 133 (FGVIGVFISTVIISFGTWWLF) form a helical membrane-spanning segment. Topologically, residues 134–171 (PKLGFKGLSARDYLAIGTIFSSTDTVCTLQILHQDETP) are vacuolar. The chain crosses the membrane as a helical span at residues 172 to 192 (LLYSLVFGEGVVNDATSVVLF). At 193 to 214 (NAVQKIQFESLTGWTALQVFGN) the chain is on the cytoplasmic side. A helical membrane pass occupies residues 215–235 (FLYLFSTSTLLGIGVGLITSF). The Vacuolar segment spans residues 236–250 (VLKTLYFGRHSTTRE). The helical transmembrane segment at 251–267 (LAIMVLMAYLSYMLAEL) threads the bilayer. The Cytoplasmic portion of the chain corresponds to 268-273 (FSLSGI). The helical transmembrane segment at 274–291 (LTVFFCGVLMSHYASYNV) threads the bilayer. Residues 292–301 (TESSRITSRH) lie on the Vacuolar side of the membrane. A helical transmembrane segment spans residues 302 to 322 (VFAMLSFIAETFIFLYVGTDA). The Cytoplasmic portion of the chain corresponds to 323–342 (LDFTKWKTSSLSFGGTLGVS). A helical membrane pass occupies residues 343-363 (GVITALVLLGRAAFVFPLSVL). The Vacuolar portion of the chain corresponds to 364 to 380 (TNFMNRHTERNESITFK). N-linked (GlcNAc...) asparagine glycosylation occurs at Asn374. Residues 381–401 (HQVIIWWAGLMRGAVSIALAF) form a helical membrane-spanning segment. Residues 402–415 (KQFTYSGVTLDPVN) lie on the Cytoplasmic side of the membrane. A helical membrane pass occupies residues 416 to 436 (AAMVTNTTIVVLFTTLVFGFL). Residues 437–529 (TKPLVNYLLP…GPRRENQPEC (93 aa)) are Vacuolar-facing.

Belongs to the monovalent cation:proton antiporter 1 (CPA1) transporter (TC 2.A.36) family. Expressed at very low levels in roots and shoots.

The protein resides in the vacuole membrane. The enzyme catalyses Na(+)(in) + H(+)(out) = Na(+)(out) + H(+)(in). The catalysed reaction is K(+)(in) + H(+)(out) = K(+)(out) + H(+)(in). May act in low affinity electroneutral exchange of protons for cations such as Na(+) or K(+) across membranes. May also exchange Li(+) and Cs(+) with a lower affinity. This Arabidopsis thaliana (Mouse-ear cress) protein is Sodium/hydrogen exchanger 4 (NHX4).